Reading from the N-terminus, the 229-residue chain is Non-structural protein V (229 aa).

The segment at 28–115 is disordered; it reads LGATSQPPPN…DTQSPSPSKT (88 aa). A compositionally biased stretch (basic and acidic residues) spans 45–55; it reads KTEENNDETRT. The segment covering 59 to 71 has biased composition (low complexity); that stretch reads SASAEAPAHASSP. 2 stretches are compositionally biased toward polar residues: residues 82–97 and 105–115; these read GKQS…NRPQ and SDTQSPSPSKT. Positions 178, 197, 201, 213, 215, 218, 222, and 225 each coordinate Zn(2+).

This sequence belongs to the paramyxoviruses V protein family.

In terms of biological role, blocks host interferon signaling. This chain is Non-structural protein V (P/V), found in Human parainfluenza 4b virus (strain 68-333) (HPIV-4b).